Here is an 861-residue protein sequence, read N- to C-terminus: Interleukin-12 receptor subunit beta-2 (861 aa).

The N-terminal stretch at 1-23 (MARTVCGCSWALIFIIMSLLVKA) is a signal peptide. Topologically, residues 24–622 (KIDVCKRGDV…REFCLQGKAN (599 aa)) are extracellular. 4 N-linked (GlcNAc...) asparagine glycosylation sites follow: N48, N129, N166, and N271. 5 Fibronectin type-III domains span residues 126 to 224 (QPQN…VVRP), 226 to 317 (PPWD…TQTP), 318 to 415 (EKEP…NIAD), 423 to 520 (APQQ…KHKA), and 521 to 620 (PLSG…LQGK). A WSXWS motif motif is present at residues 305-309 (WSDWS). N347, N376, and N480 each carry an N-linked (GlcNAc...) asparagine glycan. Residues 623-643 (WSTFVAPSICIAVITVGVFSM) traverse the membrane as a helical segment. Over 644–861 (RCFRQKVFVL…LKMGCGSLML (218 aa)) the chain is Cytoplasmic. The Box 1 motif signature appears at 662–670 (CSREIPDPA). Positions 718 to 761 (FRRPHHPNWPGKGQRLQGRHASEEDTGSSASSPPPPRALTAETG) are disordered. At Y800 the chain carries Phosphotyrosine.

It belongs to the type I cytokine receptor family. Type 2 subfamily. In terms of assembly, heterodimer/heterooligomer; disulfide-linked. The functional high affinity IL12 receptor is composed of I12RB1 and IL12RB2. Il12RB2 binds JAK2 (via its N-terminal) through a membrane-proximal region of the cytoplasmic domain. In terms of processing, on IL12 stimulation, phosphorylated on C-terminal tyrosine residues.

The protein resides in the membrane. Receptor for interleukin-12. This subunit is the signaling component coupling to the JAK2/STAT4 pathway. This chain is Interleukin-12 receptor subunit beta-2 (IL12RB2), found in Sus scrofa (Pig).